Here is a 264-residue protein sequence, read N- to C-terminus: Small ribosomal subunit protein uS2 (264 aa).

It belongs to the universal ribosomal protein uS2 family.

This Synechococcus sp. (strain JA-2-3B'a(2-13)) (Cyanobacteria bacterium Yellowstone B-Prime) protein is Small ribosomal subunit protein uS2.